The primary structure comprises 389 residues: Putative F-box protein At3g10240 (389 aa).

Residues M1–S26 are disordered. The span at K9 to K21 shows a compositional bias: basic residues. The region spanning K21–L66 is the F-box domain.

In Arabidopsis thaliana (Mouse-ear cress), this protein is Putative F-box protein At3g10240.